The primary structure comprises 1041 residues: Pre-mRNA-splicing factor ATP-dependent RNA helicase DHX16 (1041 aa).

Disordered regions lie at residues 101–207 (EDSE…AYEE) and 371–391 (LQGDEEPSAPPTSTQAQQKES). Residues Ser103, Ser106, and Ser107 each carry the phosphoserine modification. Positions 119 to 130 (QKKRKKRKHLRK) are enriched in basic residues. Phosphoserine is present on Ser160. Basic and acidic residues predominate over residues 166 to 207 (RTERERLQDLEERDAFAERVRQRDKDRTRNVLERSDKKAYEE). Polar residues predominate over residues 381–391 (PTSTQAQQKES). One can recognise a Helicase ATP-binding domain in the interval 409–573 (LAAIANHQVL…FDDAPVFRIP (165 aa)). 422 to 429 (GETGSGKT) contributes to the ATP binding site. Residues 520–523 (DEAH) carry the DEAH box motif. Positions 598–771 (SVLQIHVTQP…NVVLLLKSLG (174 aa)) constitute a Helicase C-terminal domain. Thr712 is subject to Phosphothreonine.

It belongs to the DEAD box helicase family. DEAH subfamily. DDX16/PRP8 sub-subfamily. Component of pre-catalytic spliceosome complexes. Component of the minor spliceosome, which splices U12-type introns. Interacts with GPKOW. Interacts with TRIM6. Interacts with RIGI. As to expression, expressed in the spleen, thyroid and testis. Also expressed in the brain and cerebellum.

It is found in the nucleus. Its subcellular location is the nucleoplasm. It localises to the cytoplasm. The catalysed reaction is ATP + H2O = ADP + phosphate + H(+). Required for pre-mRNA splicing as a component of the spliceosome. Contributes to pre-mRNA splicing after spliceosome formation and prior to the first transesterification reaction. As a component of the minor spliceosome, involved in the splicing of U12-type introns in pre-mRNAs. Also plays a role in innate antiviral response by acting as a pattern recognition receptor sensing splicing signals in viral RNA. Mechanistically, TRIM6 promotes the interaction between unanchored 'Lys-48'-polyubiquitin chains and DHX16, leading to DHX16 interaction with RIGI and ssRNA to amplify RIGI-dependent innate antiviral immune responses. The sequence is that of Pre-mRNA-splicing factor ATP-dependent RNA helicase DHX16 (DHX16) from Homo sapiens (Human).